The chain runs to 241 residues: E3 ubiquitin-protein ligase RNF166 (241 aa).

Residues 8 to 30 (VASSQHRQHHSHQSLATPSSADS) are disordered. The segment at 37–77 (CPICLEVYYKPVAIGSCGHTFCGECLQPCLQVSSPLCPLCR) adopts an RING-type zinc-finger fold. Zn(2+)-binding residues include C102, C105, H117, and C121. The segment at 102–121 (CRGCSKKVTLAKMRAHISSC) adopts a C2HC RNF-type zinc-finger fold. A UIM domain is found at 225–241 (DEEAALQAALALSLSEN).

The protein localises to the cytoplasm. It catalyses the reaction S-ubiquitinyl-[E2 ubiquitin-conjugating enzyme]-L-cysteine + [acceptor protein]-L-lysine = [E2 ubiquitin-conjugating enzyme]-L-cysteine + N(6)-ubiquitinyl-[acceptor protein]-L-lysine.. It functions in the pathway protein modification; protein ubiquitination. Functionally, E3 ubiquitin-protein ligase that promotes the ubiquitination of different substrates. The protein is E3 ubiquitin-protein ligase RNF166 (rnf166) of Xenopus laevis (African clawed frog).